The sequence spans 365 residues: Protein Tob1 (365 aa).

The Bipartite nuclear localization signal signature appears at 22 to 39 (RRRVNIFGEELERLLKQK). The segment at 82–92 (VRGNLPQDLSV) is important for nuclear localization. The segment covering 144 to 160 (DPASSVSSSPSPPFGHS) has biased composition (low complexity). A disordered region spans residues 144–171 (DPASSVSSSPSPPFGHSAAVSPTFMPRS). A required for interaction with CPEB3 region spans residues 161–220 (AAVSPTFMPRSTQPLTFTTATFAATKFGSTKMKNSGRSSKVARTSPISLGLNVNVNDLLK). Threonine 204 carries the post-translational modification Phosphothreonine. The Nuclear export signal motif lies at 228–236 (MHSLYGLGL). The interval 233–287 (GLGLGSQQQPQPQPQQPPSQPPPPPPPPQQQQQHQQQQQQQQQQQQQPQQQTSAL) is disordered. Pro residues predominate over residues 243 to 261 (QPQPQQPPSQPPPPPPPPQ). Positions 262–283 (QQQQHQQQQQQQQQQQQQPQQQ) are enriched in low complexity.

Belongs to the BTG family. As to quaternary structure, interacts with ERBB2. Interacts with CNOT7. Interacts with CPEB3 (via C-terminal RNA-binding region); recruits CNOT7 to CPEB3 to form a ternary complex required for mRNA deadenylation and decay. Interacts with CNOT8. Interacts with CPEB4. Phosphorylated on Ser and Thr residues.

The protein resides in the cytoplasm. It localises to the nucleus. Anti-proliferative protein; the function is mediated by association with deadenylase subunits of the CCR4-NOT complex. Mediates CPEB3-accelerated mRNA deadenylation by binding to CPEB3 and recruiting CNOT7 which leads to target mRNA deadenylation and decay. The polypeptide is Protein Tob1 (Tob1) (Rattus norvegicus (Rat)).